The following is a 636-amino-acid chain: ATP-dependent DNA helicase YoaA (636 aa).

One can recognise a Helicase ATP-binding domain in the interval 10–272 (QLAKAIPGFK…KDTQQLQKCA (263 aa)). An ATP-binding site is contributed by 45 to 52 (AGTGTGKT). Positions 108, 168, 173, and 179 each coordinate [4Fe-4S] cluster. The short motif at 225–228 (DEAH) is the DEAH box element.

This sequence belongs to the helicase family. DinG subfamily. In terms of assembly, interacts with the DNA polymerase III subunit Chi (holC), probably as a 1:1 complex. [4Fe-4S] cluster is required as a cofactor. It depends on Mg(2+) as a cofactor.

The catalysed reaction is Couples ATP hydrolysis with the unwinding of duplex DNA at the replication fork by translocating in the 5'-3' direction. This creates two antiparallel DNA single strands (ssDNA). The leading ssDNA polymer is the template for DNA polymerase III holoenzyme which synthesizes a continuous strand.. It carries out the reaction ATP + H2O = ADP + phosphate + H(+). Its activity is regulated as follows. Non-hydrolyzable ATP analogs ATP-gamma-S and adenylyl-imidodiphosphate (AMP-PNP) inhibit helicase activity. Functionally, DNA-dependent ATPase and 5'-3' DNA helicase. Has single-stranded (ss)DNA-dependent ATPase activity and 5'-3' helicase activity on forked DNA; both activities were measure in a YoaA:HolC (chi) complex. Requires a 20-35 nucleotide (nt) 5'-ssDNA tail; dsDNA with a 20 nt gap is also unwound. Unwinds damaged 3' nascent ends (such as those terminated by 3' azidothymidine (AZT), 3' dideoxy-C or an abasic site on the translocating strand), to promote repair and AZT excision. Without HolC the protein has much lower activity which could be due to YoaA instability or helicase stimulation by HolC. Genetically identified as involved in the repair of replication forks and tolerance of the chain-terminating nucleoside analog AZT. May act in proofreading during nucleotide misincorporation, it appears to aid in the removal of potential A-to-T transversion mutations in ndk mutants. This is ATP-dependent DNA helicase YoaA (yoaA) from Escherichia coli (strain K12).